Reading from the N-terminus, the 313-residue chain is Pyrimidine-specific ribonucleoside hydrolase RihB (313 aa).

Asp11 serves as the catalytic Proton acceptor. The Ca(2+) site is built by Asp11, Asp16, and Val124. 2 residues coordinate substrate: Gln227 and His239. Asp240 is a binding site for Ca(2+).

It belongs to the IUNH family. RihB subfamily. As to quaternary structure, homotetramer. Requires Ca(2+) as cofactor.

It carries out the reaction a pyrimidine ribonucleoside + H2O = a pyrimidine nucleobase + D-ribose. Its function is as follows. Hydrolyzes cytidine or uridine to ribose and cytosine or uracil, respectively. Has a clear preference for cytidine over uridine. Strictly specific for ribonucleosides. The polypeptide is Pyrimidine-specific ribonucleoside hydrolase RihB (Escherichia coli O17:K52:H18 (strain UMN026 / ExPEC)).